Here is a 200-residue protein sequence, read N- to C-terminus: Probable UbiX-like flavin prenyltransferase (200 aa).

FMN is bound by residues 9–11 (GAT), serine 36, 87–90 (SMKT), and arginine 122.

The protein belongs to the UbiX/PAD1 family. YclB subfamily. As to quaternary structure, homododecamer.

The enzyme catalyses dimethylallyl phosphate + FMNH2 = prenylated FMNH2 + phosphate. Functionally, involved in the non-oxidative decarboxylation and detoxification of phenolic derivatives under both aerobic and anaerobic conditions. Flavin prenyltransferase that catalyzes the synthesis of the prenylated FMN cofactor (prenyl-FMN) for phenolic acid decarboxylase. This Streptomyces sp. (strain D7) protein is Probable UbiX-like flavin prenyltransferase.